Here is a 463-residue protein sequence, read N- to C-terminus: Golgi-associated PDZ and coiled-coil motif-containing protein (463 aa).

Ser-2 bears the N-acetylserine mark. The stretch at 85–201 forms a coiled coil; the sequence is AQTVSQINHK…RHIAVLQAEV (117 aa). Residues 289–372 enclose the PDZ domain; it reads KVLLLKEDHE…EIEFEVVYVA (84 aa). Ser-402 and Ser-405 each carry phosphoserine.

As to quaternary structure, homooligomer. Interacts with FZD5. Interacts with FZD8. Interacts with GRID2 and BECN1. Interacts with CSPG5. Interacts with CLCN3. Interacts with STX6. Interacts with CFTR. Interacts with ASIC3. Interacts with GOLGA3. Interacts with NLGN1. Interacts with RHOQ. Interacts with MARCHF2; the interaction leads to CFTR ubiquitination and degradation. May interact with CACNG2. Interacts with CCDC62. In terms of tissue distribution, ubiquitously expressed (at protein level). Expressed in dorsal root glanglion (DRG), spinal cord and brain. Isoform 1 is preferentially expressed in whole brain (at protein level) and cerebellum. Expressed in spermatocytes and spermatides but not in Sertoli cells and spermatogonia.

It localises to the cytoplasm. Its subcellular location is the golgi apparatus membrane. The protein localises to the golgi apparatus. It is found in the trans-Golgi network membrane. The protein resides in the synapse. It localises to the postsynaptic density. Its subcellular location is the cell projection. The protein localises to the dendrite. Its function is as follows. Plays a role in intracellular protein trafficking and degradation. May regulate CFTR chloride currents and acid-induced ASIC3 currents by modulating cell surface expression of both channels. May also regulate the intracellular trafficking of the ADR1B receptor. May play a role in autophagy. Together with MARCHF2 mediates the ubiquitination and lysosomal degradation of CFTR. Overexpression results in CFTR intracellular retention and degradation in the lysosomes. The polypeptide is Golgi-associated PDZ and coiled-coil motif-containing protein (Mus musculus (Mouse)).